The chain runs to 85 residues: Large ribosomal subunit protein bL31B (85 aa).

This sequence belongs to the bacterial ribosomal protein bL31 family. Type B subfamily. Part of the 50S ribosomal subunit.

In Bifidobacterium longum subsp. infantis (strain ATCC 15697 / DSM 20088 / JCM 1222 / NCTC 11817 / S12), this protein is Large ribosomal subunit protein bL31B.